The primary structure comprises 189 residues: Small ribosomal subunit protein uS5 (189 aa).

The S5 DRBM domain occupies 22–85 (FVDKLVAINR…EAAKRELIFV (64 aa)).

This sequence belongs to the universal ribosomal protein uS5 family. As to quaternary structure, part of the 30S ribosomal subunit. Contacts proteins S4 and S8.

In terms of biological role, with S4 and S12 plays an important role in translational accuracy. Functionally, located at the back of the 30S subunit body where it stabilizes the conformation of the head with respect to the body. In Rhizobium johnstonii (strain DSM 114642 / LMG 32736 / 3841) (Rhizobium leguminosarum bv. viciae), this protein is Small ribosomal subunit protein uS5.